The sequence spans 295 residues: Ribosomal protein L11 methyltransferase (295 aa).

Residues Thr-139, Gly-166, Asp-188, and Asn-231 each contribute to the S-adenosyl-L-methionine site.

This sequence belongs to the methyltransferase superfamily. PrmA family.

The protein localises to the cytoplasm. It catalyses the reaction L-lysyl-[protein] + 3 S-adenosyl-L-methionine = N(6),N(6),N(6)-trimethyl-L-lysyl-[protein] + 3 S-adenosyl-L-homocysteine + 3 H(+). In terms of biological role, methylates ribosomal protein L11. This chain is Ribosomal protein L11 methyltransferase, found in Cyanothece sp. (strain PCC 7425 / ATCC 29141).